A 1001-amino-acid chain; its full sequence is E3 ubiquitin-protein ligase BRE1B (1001 aa).

Residues 1-31 are disordered; sequence MSGLGNKRAAGDGGSGPPEKKLSREEKTTTT. Positions 18-28 are enriched in basic and acidic residues; sequence PEKKLSREEKT. Residue lysine 20 is modified to N6-acetyllysine. Serine 42 is modified (phosphoserine). The stretch at 45 to 91 forms a coiled coil; that stretch reads EEIDLKVLQFKNKKLAERLEQRQACEDELRERIEKLEKRQATDDATL. The segment at 116 to 149 is disordered; it reads GELSSAPEAPGTQEGPTCDGTPLPEPGTSELREP. Coiled coils occupy residues 228-377 and 437-523; these read ARTR…LRSL and LQKK…AQTS. 2 positions are modified to N6-acetyllysine: lysine 355 and lysine 517. The segment at 516–646 is disordered; it reads GKLRAQTSGS…EKAKVEEAKR (131 aa). The span at 520-531 shows a compositional bias: polar residues; the sequence is AQTSGSTHSTPN. Residue serine 528 is modified to Phosphoserine. Residues lysine 578 and lysine 579 each participate in a glycyl lysine isopeptide (Lys-Gly) (interchain with G-Cter in SUMO2) cross-link. Serine 585 bears the Phosphoserine mark. Composition is skewed to basic and acidic residues over residues 602–619 and 633–646; these read RGRE…EREG and RADR…EAKR. Positions 627–946 form a coiled coil; sequence VASALSRADR…EEIKEYKARL (320 aa). The RING-type zinc-finger motif lies at 948–987; sequence CPCCNTRKKDAVLTKCFHVFCFECVRGRYEARQRKCPKCN.

It belongs to the BRE1 family. In terms of assembly, component of the RNF20/40 complex (also known as BRE1 complex) probably composed of 2 copies of RNF20/BRE1A and 2 copies of RNF40/BRE1B. Interacts with UBE2E1/UBCH6. Interacts with RB1 and WAC.

It localises to the nucleus. The catalysed reaction is S-ubiquitinyl-[E2 ubiquitin-conjugating enzyme]-L-cysteine + [acceptor protein]-L-lysine = [E2 ubiquitin-conjugating enzyme]-L-cysteine + N(6)-ubiquitinyl-[acceptor protein]-L-lysine.. Its pathway is protein modification; protein ubiquitination. In terms of biological role, component of the RNF20/40 E3 ubiquitin-protein ligase complex that mediates monoubiquitination of 'Lys-120' of histone H2B (H2BK120ub1). H2BK120ub1 gives a specific tag for epigenetic transcriptional activation and is also prerequisite for histone H3 'Lys-4' and 'Lys-79' methylation (H3K4me and H3K79me, respectively). It thereby plays a central role in histone code and gene regulation. The RNF20/40 complex forms a H2B ubiquitin ligase complex in cooperation with the E2 enzyme UBE2A or UBE2B; reports about the cooperation with UBE2E1/UBCH are contradictory. Required for transcriptional activation of Hox genes. This chain is E3 ubiquitin-protein ligase BRE1B (RNF40), found in Macaca fascicularis (Crab-eating macaque).